The following is a 118-amino-acid chain: T cell receptor gamma variable 4 (118 aa).

The N-terminal stretch at 1-17 is a signal peptide; that stretch reads MQWALAVLLAFLSPASQ. Positions 18 to 118 constitute an Ig-like domain; the sequence is KSSNLEGRTK…GVYYCATWDG (101 aa). A disulfide bond links Cys41 and Cys113. Residue Asn106 is glycosylated (N-linked (GlcNAc...) asparagine).

As to quaternary structure, gamma-delta TR is a heterodimer composed of a gamma and delta chain; disulfide-linked. The gamma-delta TR is associated with the transmembrane signaling CD3 coreceptor proteins following the stoichiometry: a single gamma-delta TR heterodimer associates with one CD3D-CD3E heterodimer, one CD3G-CD3E heterodimer and one CD247 homodimer forming a stable octameric structure. Upon activation, gamma-delta TR complex associates with FCER1G to initiate intracellular signaling.

It is found in the cell membrane. V region of the variable domain of T cell receptor (TR) gamma chain that participates in the antigen recognition. Gamma-delta TRs recognize a variety of self and foreign non-peptide antigens frequently expressed at the epithelial boundaries between the host and external environment, including endogenous lipids presented by MH-like protein CD1D and phosphoantigens presented by butyrophilin-like molecule BTN3A1. Upon antigen recognition induces rapid, innate-like immune responses involved in pathogen clearance and tissue repair. Binding of gamma-delta TR complex to antigen triggers phosphorylation of immunoreceptor tyrosine-based activation motifs (ITAMs) in the CD3 chains by the LCK and FYN kinases, allowing the recruitment, phosphorylation, and activation of ZAP70 that facilitates phosphorylation of the scaffolding proteins LCP2 and LAT. This lead to the formation of a supramolecular signalosome that recruits the phospholipase PLCG1, resulting in calcium mobilization and ERK activation, ultimately leading to T cell expansion and differentiation into effector cells. Gamma-delta TRs are produced through somatic rearrangement of a limited repertoire of variable (V), diversity (D), and joining (J) genes. The potential diversity of gamma-delta TRs is conferred by the unique ability to rearrange (D) genes in tandem and to utilize all three reading frames. The combinatorial diversity is considerably increased by the sequence exonuclease trimming and random nucleotide (N) region additions which occur during the V-(D)-J rearrangements. This chain is T cell receptor gamma variable 4, found in Homo sapiens (Human).